An 872-amino-acid chain; its full sequence is DNA mismatch repair protein MutS (872 aa).

ATP is bound at residue 623–630; that stretch reads GPNMAGKS.

Belongs to the DNA mismatch repair MutS family.

This protein is involved in the repair of mismatches in DNA. It is possible that it carries out the mismatch recognition step. This protein has a weak ATPase activity. In Trichlorobacter lovleyi (strain ATCC BAA-1151 / DSM 17278 / SZ) (Geobacter lovleyi), this protein is DNA mismatch repair protein MutS.